The following is a 975-amino-acid chain: Synaptopodin 2-like protein (975 aa).

The 80-residue stretch at 6–85 (EVQVTLAGGA…QLVLTVRRVT (80 aa)) folds into the PDZ domain. Disordered stretches follow at residues 18–41 (GFRL…QAGR), 86–214 (DEGS…PAEA), and 314–349 (AGTG…QSDW). 2 positions are modified to phosphoserine: serine 105 and serine 108. A Phosphothreonine modification is found at threonine 138. Serine 140, serine 163, serine 175, and serine 177 each carry phosphoserine. Over residues 187-200 (GSPSQGDSRVSSPS) the composition is skewed to polar residues. A compositionally biased stretch (low complexity) spans 202-214 (EEGAALQPPPAEA). The segment covering 339 to 349 (DARSLTNQSDW) has biased composition (polar residues). 5 positions are modified to phosphoserine: serine 342, serine 347, serine 371, serine 378, and serine 381. Omega-N-methylarginine is present on residues arginine 383, arginine 463, arginine 466, and arginine 476. The disordered stretch occupies residues 491 to 649 (KVNEGLGSTS…ETKNSPNPEL (159 aa)). The segment covering 502-516 (APSPFAAPPQGPTPL) has biased composition (pro residues). Residues 519 to 528 (FTTVVPSHTP) show a composition bias toward polar residues. Composition is skewed to low complexity over residues 530–540 (SGASSSTQRSS) and 571–580 (SAAAMTSTAS). Residues serine 667 and serine 675 each carry the phosphoserine modification. The tract at residues 687–731 (LGGRSYKTLPQVSPKTPPPMAPKTPPPTTPKTPPPVAPKPGSRGL) is disordered. The segment covering 701-724 (KTPPPMAPKTPPPTTPKTPPPVAP) has biased composition (pro residues). A phosphothreonine mark is found at threonine 702 and threonine 710. Position 754 is an omega-N-methylarginine (arginine 754). The disordered stretch occupies residues 772 to 797 (EATSGSSLNPGLRPRSPSPTPSLPPS). Serine 787 and serine 789 each carry phosphoserine. Threonine 791 carries the post-translational modification Phosphothreonine. Omega-N-methylarginine occurs at positions 805, 825, and 888. Serine 890 carries the phosphoserine modification. Phosphothreonine is present on residues threonine 891 and threonine 897. Arginine 909 is modified (omega-N-methylarginine). Arginine 920 carries the post-translational modification Asymmetric dimethylarginine; alternate. The residue at position 920 (arginine 920) is an Omega-N-methylarginine; alternate. An omega-N-methylarginine mark is found at arginine 953 and arginine 955.

Belongs to the synaptopodin family.

It localises to the cytoplasm. The protein resides in the cytoskeleton. Actin-associated protein that may play a role in modulating actin-based shape. The protein is Synaptopodin 2-like protein (Synpo2l) of Mus musculus (Mouse).